The primary structure comprises 95 residues: Putative pterin-4-alpha-carbinolamine dehydratase (95 aa).

Belongs to the pterin-4-alpha-carbinolamine dehydratase family.

It catalyses the reaction (4aS,6R)-4a-hydroxy-L-erythro-5,6,7,8-tetrahydrobiopterin = (6R)-L-erythro-6,7-dihydrobiopterin + H2O. The protein is Putative pterin-4-alpha-carbinolamine dehydratase of Solibacter usitatus (strain Ellin6076).